We begin with the raw amino-acid sequence, 331 residues long: MKKWMTVCALCFVFFLLVSCQQKDAVPDTAKKLKAPLTGLKTEQKVTERRPVAVVVNNHPKARPQSGLSKADIVIEALAEGQITRFLAIFQSQMPETVGPVRSAREYFVTLSNGFDSIFVHHGWSPGAKKQLESGAADYMNGLDFDGSLFWRADFSKPPHNSYTSYDYIKKAAEQKGYKLKQETNPLLFQTSDAKPANESYNVRVDYGTNNVTNLVEYNYDKKAEFYTRSSDGVITTDRETGKPVAMQNIFIVEASHHIIDQDGRRDIDLESGGKGLLFQHGNVIETDWKQVNGRIVPVKDGKWLPFVPGKTWINIVPDLDAASISKGEGV.

The signal sequence occupies residues 1–19 (MKKWMTVCALCFVFFLLVS). Cys-20 carries N-palmitoyl cysteine lipidation. Cys-20 carries S-diacylglycerol cysteine lipidation. Thr-97 is subject to Phosphothreonine. Ser-103 bears the Phosphoserine mark.

In terms of assembly, interacts with PcrA. The interaction is not essential for cell viability or repair of UV-induced lesions.

It is found in the cell membrane. This Bacillus subtilis (strain 168) protein is Putative lipoprotein YerB (yerB).